Consider the following 261-residue polypeptide: Undecaprenyl-diphosphatase 2 (261 aa).

8 helical membrane passes run M1–S21, P38–F58, F75–L95, L103–I123, M138–V158, A178–L198, L212–I232, and F240–M260.

The protein belongs to the UppP family.

It is found in the cell inner membrane. It carries out the reaction di-trans,octa-cis-undecaprenyl diphosphate + H2O = di-trans,octa-cis-undecaprenyl phosphate + phosphate + H(+). In terms of biological role, catalyzes the dephosphorylation of undecaprenyl diphosphate (UPP). Confers resistance to bacitracin. The polypeptide is Undecaprenyl-diphosphatase 2 (Paramagnetospirillum magneticum (strain ATCC 700264 / AMB-1) (Magnetospirillum magneticum)).